The sequence spans 205 residues: Large ribosomal subunit protein uL4 (205 aa).

A disordered region spans residues 44 to 79 (RAGTKAQKTRREVSGSGAKPWRQKGTGRARAGSSRS).

Belongs to the universal ribosomal protein uL4 family. In terms of assembly, part of the 50S ribosomal subunit.

Its function is as follows. One of the primary rRNA binding proteins, this protein initially binds near the 5'-end of the 23S rRNA. It is important during the early stages of 50S assembly. It makes multiple contacts with different domains of the 23S rRNA in the assembled 50S subunit and ribosome. Functionally, forms part of the polypeptide exit tunnel. This is Large ribosomal subunit protein uL4 from Coxiella burnetii (strain Dugway 5J108-111).